The following is a 297-amino-acid chain: MAQAKLIDGKAFAADLRAKIAEEVAALKAEHGVTPGLAVVLVGEDPASQVYVRNKGEQTTAAGMYSETHRLPETTTQDELLAVVAKLNADPKIHGVLVQFPVPPHISQMDVVAALSPDKDVDGLTVTNAGRLASGLPALAPCTPTGCMMLIRDAIGDLKGKTAVVIGRSNLMGKPMAQMLLAADCTVTIAHSRSQDLPSIVRQADIVVAAVGRAEMVKADWVKPGAVVIDVGITRFPARDPEAAAAGKTRLVGDVAFDEVREVAGAITPVPGGVGPMTIACLLANTLTAAKRLSGIA.

Residues 167–169 (GRS), S192, and I233 each bind NADP(+).

This sequence belongs to the tetrahydrofolate dehydrogenase/cyclohydrolase family. Homodimer.

It catalyses the reaction (6R)-5,10-methylene-5,6,7,8-tetrahydrofolate + NADP(+) = (6R)-5,10-methenyltetrahydrofolate + NADPH. The catalysed reaction is (6R)-5,10-methenyltetrahydrofolate + H2O = (6R)-10-formyltetrahydrofolate + H(+). It functions in the pathway one-carbon metabolism; tetrahydrofolate interconversion. Catalyzes the oxidation of 5,10-methylenetetrahydrofolate to 5,10-methenyltetrahydrofolate and then the hydrolysis of 5,10-methenyltetrahydrofolate to 10-formyltetrahydrofolate. This Caulobacter vibrioides (strain ATCC 19089 / CIP 103742 / CB 15) (Caulobacter crescentus) protein is Bifunctional protein FolD.